Reading from the N-terminus, the 363-residue chain is S-adenosylmethionine:tRNA ribosyltransferase-isomerase (363 aa).

The protein belongs to the QueA family. In terms of assembly, monomer.

The protein localises to the cytoplasm. It carries out the reaction 7-aminomethyl-7-carbaguanosine(34) in tRNA + S-adenosyl-L-methionine = epoxyqueuosine(34) in tRNA + adenine + L-methionine + 2 H(+). Its pathway is tRNA modification; tRNA-queuosine biosynthesis. Its function is as follows. Transfers and isomerizes the ribose moiety from AdoMet to the 7-aminomethyl group of 7-deazaguanine (preQ1-tRNA) to give epoxyqueuosine (oQ-tRNA). This chain is S-adenosylmethionine:tRNA ribosyltransferase-isomerase, found in Haemophilus influenzae (strain PittEE).